Here is a 90-residue protein sequence, read N- to C-terminus: U7-theraphotoxin-Hhn1a 8 (90 aa).

A signal peptide spans 1–19 (MKTAIFTVVLALAVFAVLS). Residues 20–50 (FGWEANEKALSEEFTELIHEKGAASETEARE) constitute a propeptide that is removed on maturation. 3 disulfide bridges follow: C51–C65, C58–C70, and C64–C81.

The protein belongs to the neurotoxin 10 (Hwtx-1) family. 13 (Hntx-13) subfamily. In terms of tissue distribution, expressed by the venom gland.

The protein resides in the secreted. Its function is as follows. Ion channel inhibitor. The sequence is that of U7-theraphotoxin-Hhn1a 8 from Cyriopagopus hainanus (Chinese bird spider).